The chain runs to 40 residues: Large ribosomal subunit protein bL36A (40 aa).

Belongs to the bacterial ribosomal protein bL36 family.

The sequence is that of Large ribosomal subunit protein bL36A from Saccharopolyspora erythraea (strain ATCC 11635 / DSM 40517 / JCM 4748 / NBRC 13426 / NCIMB 8594 / NRRL 2338).